A 4582-amino-acid chain; its full sequence is MSTNPPQPPPSSTIASNPPQPIATPMSTTNPSQPTITSSSAASSSSSSSSGNPVNFESYARRCFELNNNNEQTQLLALVTEIRDNIELVHTVEYPTFLNFLFPVFYNILRQGAVQFNDGPEQKIRNTILDILNKLPNNELLRPHILVLLQLSMYLLEVDNEENALVCLRIIIELHKNYRNALESEIQPFLNIVLKLYTDLPSTIEKTFSSSSSASLSTTTTAISPTTTTTTTPATATTPATTTATGNTITTPPPATPPSTTATAISPTSSTTTTTTATTAAAATIATTTATTTITPPLPPYMIKSIESFKILTECPIVVILLFQLYNSYMSSNVPKFIPLIIETLSLQAPANSTVTHHSQYVDFIAAQVKTLYLLAYVLKWHIEQIKQYSDRFPRSVIQLLQNCPAHSSAIRKELLVTLRHILSSDFKSKFIVYLDLLLDEKIILGTSRTSYESLRSMAYGSLADFIHNMRNELNINQISKVVAIYSRHLHDQTNPVSIQIMSVKLIISLMDVIQRKQDPPEYKSRSIIYKVIESFINKFSSLKRSIPKLLADQQKEKEKELKDPQSLKDKLDGLSSANTTTSSTGEIIILDPVKDTRTLIKTMTSSLRNIFWSLSACPINKPGTGITTGAGATTTTTTNTNNTIIPPVRIALPSIEESLLFIKLFKSTVKCFPIYGGCNPSPQEEKEMIENFTASFMMLDQRTFQEVSTFILPFLYQRSLNNPSLLLIPQGFLSVTQMNPTGVQINRVFLEVLTPFLYEKIRNLQPTDKPDICMIKLIKLIFNAIQPNNNSGVGGSGGSNSSGGGGGGGSNSSNNSTNSNTTTNIDSTCVQQVLSSMILILLKLITESKQIDSIQYLLLLKTIFKSCTRPDQSKEITLLFPIILETLNDLLLSSSHSTMIPAVQQLLIELSLSIPVQIATLLPSLHLLVKPLMLALDSSSSELLSTTFRILELIVDNATGDFLLFTFRDNKSEFLQILSKHLRPAPYFYGPHAIRILGKMAGKSRSFSVLSPILSIDSTSNSRSIPSSNKNNNNNNYYYNGSCSNSENYSKVFKLLLPCETGDDKTKSIPLDKSIQSIKNILLYQLDDSYLQSNAYSLLKYYISLYLSSQDFLINQQSLLNELLNNLKQSNNNNNNNSSTVNLNIIELDNENENENDNNNNNNNNNNNNNNNNNNNNNNNNNNNNNNNNNNNNIKTFKTKEEYLNEIKNFKDLVYCLFLSITNDHLKEKFDSLKFLNNFIYHFVLYLSTFKFNYSIISMKELDPKIFLEALVDVMSMSSHNIINQSNIEDLQTISTSKFNKAHITSLLDMIFNCSNQIFSENSNSKKNNELMTSSTDVKDGEKVEMETEDSLKKDEMSAAATSEIKKETNVVVENEQDKDTVLISPIFKYLVKLFIKCCYDKDFSVKGAGLIGIEYIIENVKLSWIQPFQHLILKSLLFVCEDLSYSGYQPTIDYASEIIINLIKLCVPNLNIVPDSMEIDQSTTTASTTETAATTTTTETATPMVTESTAIVTEPTATTPTATPTSTPTSTSTPTPTPIPTATTSSTTTAPTTTTTTTTNLSSSSTINQKPHCKLNQLKLKDRELLKLILEILMERITSWSGHTRSLAQRMLTMISVEITKIPMSQLIEDLKMTVQKLLPKTPLKSLSISLQTGVIDGLTFCLSQKPSPLIEIGADTVRVLQECLNVAGDESSPTQQSQIKSSSAKSISATNNLRVCGVEMVATAMTCPDFLQFECLEFKNRIIRMFFKVVTARNKEMAMAAKRGLANSIQQQRLHRDLLQTCLRPVLSNITDPKSLSVPFLQGLSRLLELLSNCFNAALGEKLFEYLKKFEEAGKLSYLANKYRDSEEVKICASIIDIFHLLPPAAKLLDSTIILTIRLEQSLCKEVTSPYREPLIRFLAKYPQRTIEIFMGQLPQFNLIFRLILKHQPLSKPIVEELANTYSIWLEAHLKSPSADIRFHTLSMVSIIRKQLPNWLPENRKVLDILIEYWRPLSHMIQSASNPLDISNQTLRETKIIVKCFLQYCKAHSEETDLYFYMLSVLTLRASMDFNFLRDYYQHDLAPSSTIEQKKKIIQTFLIFFKDQTIPSDNKVQAIQNLITPILTNYFHQTDRNSSSGGGIIEDSLFIQLTKQTLETEVKASYDDTLLIELLQLETLLVKNLSSVLVDCRKELIKFAWNHLKNEDLTCKQSAYILACGFIEAYETPHKIVLQVYVPLLRAYQPESKHLVKQALDILMPCFKTRLPGGDPKNSTWVKWTKKIIVEEGHTTAQLVHIIQLIVRHPQLFYPSRSQFVPHIILLLPKIALGSNLTAENKKLSIDIADTIIIWEKMRMSNLQQSIKTSSSSLPTTTTTTTSSNKPTDSSSLPPNTPIAEGSITTPSQGGVATPNVSDSTPTPGIHHGATNIDDEYRPPLSAIEHISLFLIRMASNWYHINEKCSELLRQTLVIWPETNIKFSVFEKPMNTDQPQMISTCLSMLNLIAEYQVNTFIPNNVVALQQSLLQALNSDNAKISSLLGSLFKKILAAFPLPTNNTTTTTPVSSTTTTEQSSDSSSLPPPPPVQVTKPIPNEMVSFYTFIGTQFEMILGAFDKNYNLSILSNIKVFSDHSESFIDPYISLIVKVLIRLTRNYLSQDSDGGTGSLANKPLSSSGSTSQTGGASQTATSASNVVLKKSNSEIISGLCKTYGFLKTKTTKLNSDQRNAFIQSLLVLIERSNDVELLSEIIKVVDYLISISPSPSPSTTPVVTETTIPSTTTTTTTAATTTTTTTPSTTTTAATTTTAPTTTETTTTAATTTITPFLTIKEKINFLIKLGRVDQLSNAELSLSYYKLVLSFYSESNSSSKQELSQLEPCFMMGLRNTVDQGMRKSLFNILHKSIGTTPYQRLNYIIGVQQWDILGTTYWIKHALDLLLAILPNDKFVKISNFCSKLPTSLKFANRNGNDINQQQQQQQQQQQQQQQQQQQQQQQQQQQQQQQQQQQQQQHHQQEQPMEIDENLVVEQSSSVNKGNEEFKKSLKLHTQWLESLKNEESLKFSEFNENLRELIFIDSHLVNDLWCHLFSDMWSDLTKEEQFKLSKSLTLLLSKDYTKKVPLVSKPIIPPTSIPISKPIITTTTSTSSSTSTTTPITTIPLINNSQLITIVTLTQQQTNPIIVPSLREPNVIKTWMETLGMCKPIPKVPIEVISFLGENYNCWYYAIRMIEQQLIDRQKLLDSTDINWDYLSYLYGAIGEKDLLYGIYRKRYQCDETKLGLLLEQFYMFQSSQEVFLSAMNKYSAVGCKPTPRSENLLWEDHWLECAKRLNQWNFVHEFSKEKNMYDLTIESAWKIPQWNSVKENMKKMMSQGDTSIRKILQGYFLTNEKRYHEVDPAIVTSNQLILDKWVSLPERSFRSHTNSLVEMQQVVELQESVHILKEISNITLSQQPADLSRSFLTSNYIKSIFNIWRERLPNKDEDLLIWFELMAWRQQVFNIIGTPSMNGGIGANPVTPTNTTTTITNPDGTTTTTTTPLPPPQQPINQIEFASPRYMVLEMAWTMNKYSHIVRKHNIIEVCLNSLSKMFDLQIELHDIFLNLKEQIKCYLQLPTHYDTGISIINSTNLDFFTPMQKGEFLQLKGEFLNRLGRYDEANQSFASSVSQYENSAKNWISWAHFCDNQFTNHSSSSITPSSTPTTYDIKTQWAESAISCYIQGIKCDPKYGSRYVPRIFWLLYLNGSGEVPQQIQTQQQQQQAAAQGGLPPQPRKLTPAQSVFQSFLNSWTILPQWIWLNYMPQLISGAANLLNFPGYGFLCWQMIGKICYLFPNSSYYHFRKLVLEMKSNASKFTTSPPTTTTTATTTTTATTTITTATTTSTPTQTTPTQNTTTPIKEESSTTTATTTPAVPSTSTPTSTSAPAPISTSTNTPPNATTTTPQANTTSPPPPSSTFSPLKMTETLSLGLHQYHSCLINEIDMMLGSFSILSGSIPAVYQFNGSLNQILLEAFKLNKIEDSIYNSIRSLYKHYFVNEIKYQNSKEFLEAYKSEFKVDFIEFNLDDIVSDTIKKESDQETNVVEGTTNVSKELETTSEKQQQQQQQLPTISILLLIEKLIKWIDRKPDNSLITVVNTDQSTNYYGIDTMICLESICPQLVNFKPSILEIPGQYNTNRDPNIENNVKVEKVGMFAKLIKHSNGMVCPRITLYGGNGKAYQFLIESSPSLINGITNSNNNNVARVYERKNQLLGSINSMLIKNRETRRRGLTLNSYPTVVPIKNSLTMIQNIGNDSIKQLAEVWYTHSNQSNLFKPMLKYKEMLLNSNLHTELLSKKDQDGDLEFTNITEDNNISSSSSSSSSSGSNSGENSPIIDSSKLVVFREMSKEIGDELMINYIQSTLLPTNYQDQYEFKLNFSNQFGLHSLLQYILFSDIGDIDPSKIYLTKSTGSVYYNDWSLKLTNRKLGFDLLQDNPYNQQQLLRLSPNIRNYLGPLYLEGSYLSSMISTCICLSDLKDQLVNSINLFIFDEYMCMNNVEPLQQSEQNKDRNIHYEFIDKTTATVHQMLENRIDSLTPSSQPDKTCFISPIVKKVNQLIQNSLSSNISQLDQLSCPWL.

The span at 1–11 (MSTNPPQPPPS) shows a compositional bias: pro residues. Disordered regions lie at residues 1–52 (MSTN…SSGN), 219–276 (TTTA…TTTT), 556–581 (KEKE…ANTT), 794–821 (VGGS…TNSN), 1152–1195 (ENEN…NNNI), 1483–1570 (QSTT…STIN), 2341–2410 (SIKT…NIDD), 2537–2567 (TTTT…QVTK), 2637–2662 (SDGG…GGAS), and 2741–2789 (SPST…TTTE). Positions 25–37 (PMSTTNPSQPTIT) are enriched in polar residues. Low complexity-rich tracts occupy residues 38–50 (SSSA…SSSS), 219–250 (TTTA…NTIT), and 258–276 (PSTT…TTTT). A compositionally biased stretch (basic and acidic residues) spans 556-573 (KEKEKELKDPQSLKDKLD). The segment covering 794 to 811 (VGGSGGSNSSGGGGGGGS) has biased composition (gly residues). Low complexity-rich tracts occupy residues 812-821 (NSSNNSTNSN), 1158-1194 (DNNN…NNNN), 1484-1504 (STTT…ETAT), 1515-1568 (TEPT…SSST), and 2341-2367 (SIKT…DSSS). The segment covering 2378–2398 (SITTPSQGGVATPNVSDSTPT) has biased composition (polar residues). 2 stretches are compositionally biased toward low complexity: residues 2537 to 2556 (TTTT…DSSS) and 2650 to 2662 (SSSG…GGAS). The stretch at 2944-2991 (NDINQQQQQQQQQQQQQQQQQQQQQQQQQQQQQQQQQQQQQQHHQQEQ) forms a coiled coil. Positions 3185 to 3815 (VISFLGENYN…YYHFRKLVLE (631 aa)) constitute an FAT domain. Composition is skewed to low complexity over residues 3491–3509 (TNTT…TTTT) and 3824–3916 (TTSP…ANTT). Disordered regions lie at residues 3491–3517 (TNTT…PQQP) and 3821–3928 (SKFT…FSPL). One can recognise a PI3K/PI4K catalytic domain in the interval 4171 to 4541 (VCPRITLYGG…MLENRIDSLT (371 aa)). The interval 4177 to 4183 (LYGGNGK) is G-loop. Residues 4312–4337 (NITEDNNISSSSSSSSSSGSNSGENS) form a disordered region. The segment covering 4320–4337 (SSSSSSSSSSGSNSGENS) has biased composition (low complexity). The segment at 4400–4408 (DIGDIDPSK) is catalytic loop. The tract at residues 4429–4451 (NRKLGFDLLQDNPYNQQQLLRLS) is activation loop. The FATC domain occupies 4538–4582 (DSLTPSSQPDKTCFISPIVKKVNQLIQNSLSSNISQLDQLSCPWL).

The protein belongs to the PI3/PI4-kinase family. TRA1 subfamily.

The protein is Probable transcription-associated protein 1 (tra1) of Dictyostelium discoideum (Social amoeba).